A 466-amino-acid chain; its full sequence is 3-isopropylmalate dehydratase large subunit (466 aa).

[4Fe-4S] cluster is bound by residues C347, C407, and C410.

Belongs to the aconitase/IPM isomerase family. LeuC type 1 subfamily. Heterodimer of LeuC and LeuD. Requires [4Fe-4S] cluster as cofactor.

It carries out the reaction (2R,3S)-3-isopropylmalate = (2S)-2-isopropylmalate. Its pathway is amino-acid biosynthesis; L-leucine biosynthesis; L-leucine from 3-methyl-2-oxobutanoate: step 2/4. Functionally, catalyzes the isomerization between 2-isopropylmalate and 3-isopropylmalate, via the formation of 2-isopropylmaleate. This Vibrio campbellii (strain ATCC BAA-1116) protein is 3-isopropylmalate dehydratase large subunit.